Reading from the N-terminus, the 473-residue chain is 3-isopropylmalate dehydratase large subunit (473 aa).

[4Fe-4S] cluster-binding residues include C351, C414, and C417.

This sequence belongs to the aconitase/IPM isomerase family. LeuC type 1 subfamily. In terms of assembly, heterodimer of LeuC and LeuD. Requires [4Fe-4S] cluster as cofactor.

The enzyme catalyses (2R,3S)-3-isopropylmalate = (2S)-2-isopropylmalate. Its pathway is amino-acid biosynthesis; L-leucine biosynthesis; L-leucine from 3-methyl-2-oxobutanoate: step 2/4. Its function is as follows. Catalyzes the isomerization between 2-isopropylmalate and 3-isopropylmalate, via the formation of 2-isopropylmaleate. The polypeptide is 3-isopropylmalate dehydratase large subunit (Paracidovorax citrulli (strain AAC00-1) (Acidovorax citrulli)).